Consider the following 222-residue polypeptide: MIF4G domain-containing protein (222 aa).

Residues 3–205 (EPSREEYKIQ…LEIIEFRAAG (203 aa)) form the MIF4G domain.

This sequence belongs to the MIF4GD family. In terms of assembly, interacts with EIF4G1, EIF4G2 and SLBP; probably tethered by SLBP to the 3'-end of mRNAs ending with the histone stem-loop, it also interacts with EIF4G1 which is bound to their 5'-end.

The protein resides in the cytoplasm. It is found in the nucleus. Functionally, functions in replication-dependent translation of histone mRNAs which differ from other eukaryotic mRNAs in that they do not end with a poly-A tail but a stem-loop. May participate in circularizing those mRNAs specifically enhancing their translation. This chain is MIF4G domain-containing protein (MIF4GD), found in Homo sapiens (Human).